The following is a 93-amino-acid chain: CRISPR-associated endoribonuclease Cas2 (93 aa).

A Mg(2+)-binding site is contributed by Asp8.

The protein belongs to the CRISPR-associated endoribonuclease Cas2 protein family. As to quaternary structure, homodimer, forms a heterotetramer with a Cas1 homodimer. Requires Mg(2+) as cofactor.

In terms of biological role, CRISPR (clustered regularly interspaced short palindromic repeat), is an adaptive immune system that provides protection against mobile genetic elements (viruses, transposable elements and conjugative plasmids). CRISPR clusters contain sequences complementary to antecedent mobile elements and target invading nucleic acids. CRISPR clusters are transcribed and processed into CRISPR RNA (crRNA). Functions as a ssRNA-specific endoribonuclease. Involved in the integration of spacer DNA into the CRISPR cassette. The protein is CRISPR-associated endoribonuclease Cas2 of Thermofilum pendens (strain DSM 2475 / Hrk 5).